The chain runs to 294 residues: Cytidine deaminase (294 aa).

2 CMP/dCMP-type deaminase domains span residues aspartate 48–lysine 168 and leucine 186–alanine 294. Asparagine 89 to glutamate 91 serves as a coordination point for substrate. Histidine 102 is a binding site for Zn(2+). Glutamate 104 functions as the Proton donor in the catalytic mechanism. 2 residues coordinate Zn(2+): cysteine 129 and cysteine 132.

This sequence belongs to the cytidine and deoxycytidylate deaminase family. As to quaternary structure, homodimer. The cofactor is Zn(2+).

It catalyses the reaction cytidine + H2O + H(+) = uridine + NH4(+). The enzyme catalyses 2'-deoxycytidine + H2O + H(+) = 2'-deoxyuridine + NH4(+). In terms of biological role, this enzyme scavenges exogenous and endogenous cytidine and 2'-deoxycytidine for UMP synthesis. In Shigella dysenteriae serotype 1 (strain Sd197), this protein is Cytidine deaminase.